Here is a 602-residue protein sequence, read N- to C-terminus: Elongation factor 4 (602 aa).

The tr-type G domain occupies 7 to 189; it reads SRIRNFSIIA…SIVQQVPPPA (183 aa). Residues 19–24 and 136–139 each bind GTP; these read DHGKST and NKID.

It belongs to the TRAFAC class translation factor GTPase superfamily. Classic translation factor GTPase family. LepA subfamily.

Its subcellular location is the cell inner membrane. The catalysed reaction is GTP + H2O = GDP + phosphate + H(+). Functionally, required for accurate and efficient protein synthesis under certain stress conditions. May act as a fidelity factor of the translation reaction, by catalyzing a one-codon backward translocation of tRNAs on improperly translocated ribosomes. Back-translocation proceeds from a post-translocation (POST) complex to a pre-translocation (PRE) complex, thus giving elongation factor G a second chance to translocate the tRNAs correctly. Binds to ribosomes in a GTP-dependent manner. The sequence is that of Elongation factor 4 from Picosynechococcus sp. (strain ATCC 27264 / PCC 7002 / PR-6) (Agmenellum quadruplicatum).